We begin with the raw amino-acid sequence, 86 residues long: 4-hydroxyphenylacetate decarboxylase small subunit (86 aa).

Residues His-3, Cys-6, Cys-19, Cys-36, Cys-45, Cys-48, Cys-62, and Cys-80 each contribute to the [4Fe-4S] cluster site.

The protein belongs to the HPA decarboxylase small subunit family. Heterooctamer consisting of 4 large (HpdB) subunits and 4 small (HpdC) subunits, arranged as a tetramer of heterodimers. It depends on [4Fe-4S] cluster as a cofactor.

It catalyses the reaction 4-hydroxyphenylacetate + H(+) = 4-methylphenol + CO2. It carries out the reaction 3,4-dihydroxyphenylacetate + H(+) = 4-methylcatechol + CO2. Functionally, component of the HPA decarboxylase that decarboxylates phenylacetates with a hydroxyl group in the p-position. Active toward 4-hydroxyphenylacetate and 3,4-dihydroxyphenylacetate, forming 4-methylphenol and 4-methylcatechol, respectively. Is likely involved in the catabolism of aromatic amino acids such as tyrosine fermentation. 4-methylphenol (p-cresol) formation provides metabolic toxicity, which allows an active suppression of other microbes and may provide growth advantages for the producers in highly competitive environments. The small subunit is essential for enzymatic activity of HPA decarboxylase, and also seems to be involved in the regulation of the enzyme oligomeric state and catalytic activity. This Clostridium scatologenes protein is 4-hydroxyphenylacetate decarboxylase small subunit.